The sequence spans 550 residues: Natural resistance-associated macrophage protein 1 (550 aa).

The segment at 1–45 is disordered; that stretch reads MTGDKGPQRLSGSSYGSISSPTSPTSPGPQQAPPRETYLSEKIPI. Residues 1–58 are Cytoplasmic-facing; it reads MTGDKGPQRLSGSSYGSISSPTSPTSPGPQQAPPRETYLSEKIPIPDTKPGTFSLRKL. Positions 11–23 are enriched in low complexity; it reads SGSSYGSISSPTS. Residues 59–76 form a helical membrane-spanning segment; that stretch reads WAFTGPGFLMSIAFLDPG. Over 77-85 the chain is Extracellular; the sequence is NIESDLQAG. Residues 86-105 form a helical membrane-spanning segment; that stretch reads AVAGFKLLWVLLWATVLGLL. The Cytoplasmic portion of the chain corresponds to 106 to 142; that stretch reads CQRLAARLGVVTGKDLGEVCHLYYPKVPRTVLWLTIE. The helical transmembrane segment at 143–163 threads the bilayer; that stretch reads LAIVGSDMQEVIGTAIAFNLL. Over 164–167 the chain is Extracellular; that stretch reads SAGR. The helical transmembrane segment at 168–187 threads the bilayer; that stretch reads IPLWGGVLITIVDTFFFLFL. Residues 188-196 lie on the Cytoplasmic side of the membrane; sequence DNYGLRKLE. A helical membrane pass occupies residues 197 to 217; that stretch reads AFFGLLITIMALTFGYEYVVA. Residues 218-240 lie on the Extracellular side of the membrane; the sequence is RPEQGALLRGLFLPSCPGCGHPE. A helical membrane pass occupies residues 241–259; sequence LLQAVGIVGAIIMPHNIYL. At 260–287 the chain is on the cytoplasmic side; sequence HSALVKSREIDRARRADIREANMYFLIE. Residues 288 to 307 traverse the membrane as a helical segment; sequence ATIALSVSFIINLFVMAVFG. Residues 308 to 349 lie on the Extracellular side of the membrane; it reads QAFYQKTNQAAFNICANSSLHDYAKIFPMNNATVAVDIYQGG. Residues N324 and N338 are each glycosylated (N-linked (GlcNAc...) asparagine). Residues 350–369 traverse the membrane as a helical segment; sequence VILGCLFGPAALYIWAIGLL. The Cytoplasmic segment spans residues 370-400; that stretch reads AAGQSSTMTGTYAGQFVMEGFLRLRWSRFAR. The chain crosses the membrane as a helical span at residues 401–418; sequence VLLTRSCAILPTVLVAVF. Topologically, residues 419-429 are extracellular; that stretch reads RDLRDLSGLND. The chain crosses the membrane as a helical span at residues 430-450; the sequence is LLNVLQSLLLPFAVLPILTFT. Topologically, residues 451 to 466 are cytoplasmic; that stretch reads SMPTLMQEFANGLLNK. Residues 467-488 traverse the membrane as a helical segment; that stretch reads VVTSSIMVLVCAINLYFVVSYL. Topologically, residues 489 to 496 are extracellular; it reads PSLPHPAY. Residues 497–516 traverse the membrane as a helical segment; that stretch reads FGLAALLAAAYLGLSTYLVW. Topologically, residues 517-550 are cytoplasmic; that stretch reads TCCLAHGATFLAHSSHHHFLYGLLEEDQKGETSG.

Belongs to the NRAMP family. As to expression, macrophages; peripheral blood leukocytes, lung, spleen and liver.

The protein resides in the late endosome membrane. The protein localises to the lysosome membrane. It catalyses the reaction Zn(2+)(in) + H(+)(out) = Zn(2+)(out) + H(+)(in). The catalysed reaction is Fe(2+)(in) + H(+)(out) = Fe(2+)(out) + H(+)(in). It carries out the reaction Mn(2+)(in) + H(+)(out) = Mn(2+)(out) + H(+)(in). In terms of biological role, macrophage-specific antiporter that fluxes metal ions in either direction against a proton gradient. Localized to late endosomal lysosomal membranes, delivers bivalent cations from the cytosol into these acidic compartments where they may directly affect antimicrobial activity. Involved in iron metabolism and host natural resistance to infection with intracellular parasites. Pathogen resistance involves sequestration of Fe(2+) and Mn(2+), cofactors of both prokaryotic and eukaryotic catalases and superoxide dismutases, not only to protect the macrophage against its own generation of reactive oxygen species, but to deny the cations to the pathogen for synthesis of its protective enzymes. This chain is Natural resistance-associated macrophage protein 1, found in Homo sapiens (Human).